The sequence spans 372 residues: tRNA-specific 2-thiouridylase MnmA (372 aa).

Residues 16–23 and methionine 42 contribute to the ATP site; that span reads GMSGGVDS. The interval 102–104 is interaction with target base in tRNA; it reads NPD. Cysteine 107 functions as the Nucleophile in the catalytic mechanism. Cysteine 107 and cysteine 205 form a disulfide bridge. An ATP-binding site is contributed by glycine 132. Residues 155-157 form an interaction with tRNA region; sequence KDQ. Catalysis depends on cysteine 205, which acts as the Cysteine persulfide intermediate. Residues 317 to 318 form an interaction with tRNA region; sequence RY.

It belongs to the MnmA/TRMU family.

It is found in the cytoplasm. The catalysed reaction is S-sulfanyl-L-cysteinyl-[protein] + uridine(34) in tRNA + AH2 + ATP = 2-thiouridine(34) in tRNA + L-cysteinyl-[protein] + A + AMP + diphosphate + H(+). Functionally, catalyzes the 2-thiolation of uridine at the wobble position (U34) of tRNA, leading to the formation of s(2)U34. This chain is tRNA-specific 2-thiouridylase MnmA, found in Shewanella oneidensis (strain ATCC 700550 / JCM 31522 / CIP 106686 / LMG 19005 / NCIMB 14063 / MR-1).